The sequence spans 150 residues: Sec-independent protein translocase protein TatB (150 aa).

Residues 1-21 traverse the membrane as a helical segment; that stretch reads MFDLSWSEIALVGVVALIVIG. Residues 77 to 86 show a composition bias toward basic and acidic residues; the sequence is KIDQAIDPDG. Residues 77 to 150 are disordered; the sequence is KIDQAIDPDG…RTDGSLPPQD (74 aa). Residues 109 to 135 show a composition bias toward pro residues; it reads AAPPSLPPQAPAQPVPPATGAAPPSPS.

Belongs to the TatB family. The Tat system comprises two distinct complexes: a TatABC complex, containing multiple copies of TatA, TatB and TatC subunits, and a separate TatA complex, containing only TatA subunits. Substrates initially bind to the TatABC complex, which probably triggers association of the separate TatA complex to form the active translocon.

It localises to the cell inner membrane. Its function is as follows. Part of the twin-arginine translocation (Tat) system that transports large folded proteins containing a characteristic twin-arginine motif in their signal peptide across membranes. Together with TatC, TatB is part of a receptor directly interacting with Tat signal peptides. TatB may form an oligomeric binding site that transiently accommodates folded Tat precursor proteins before their translocation. This is Sec-independent protein translocase protein TatB from Rhodospirillum rubrum (strain ATCC 11170 / ATH 1.1.1 / DSM 467 / LMG 4362 / NCIMB 8255 / S1).